Here is a 499-residue protein sequence, read N- to C-terminus: ADP,ATP carrier protein 5 (499 aa).

The next 11 membrane-spanning stretches (helical) occupy residues 25–45 (LGKF…QNVL), 61–81 (IAGF…VIIY), 93–113 (IFYY…FVIY), 148–168 (YIVY…LLFW), 183–203 (FYTL…FLMM), 223–243 (ITLV…CCLL), 286–306 (LWLL…VEAV), 327–347 (LYIL…NNIM), 356–376 (AVIS…LIVF), 380–400 (ILSL…VSIG), and 468–488 (LISP…IYAV).

This sequence belongs to the ADP/ATP translocase tlc family.

The protein localises to the cell membrane. Provides the rickettsial cell with host ATP in exchange for rickettsial ADP. This is an obligate exchange system. This energy acquiring activity is an important component of rickettsial parasitism. The sequence is that of ADP,ATP carrier protein 5 (tlcE) from Rickettsia conorii (strain ATCC VR-613 / Malish 7).